We begin with the raw amino-acid sequence, 124 residues long: UPF0231 protein Shewana3_0655 (124 aa).

It belongs to the UPF0231 family.

The sequence is that of UPF0231 protein Shewana3_0655 from Shewanella sp. (strain ANA-3).